The primary structure comprises 116 residues: Spexin (116 aa).

An N-terminal signal peptide occupies residues 1 to 26 (MKGPSVLAVTAVVLLLVLSALENSSG). Residues 27-35 (APQRLSEKR) constitute a propeptide that is removed on maturation. Gln49 carries the glutamine amide modification. 2 consecutive propeptides follow at residues 50–116 (GRRF…LFNW) and 74–116 (PDLE…LFNW). Residues 52–77 (RFLSDQSRRKELADRPPPERRNPDLE) are disordered. Basic and acidic residues predominate over residues 53 to 75 (FLSDQSRRKELADRPPPERRNPD).

Belongs to the spexin family.

It is found in the secreted. It localises to the extracellular space. The protein resides in the cytoplasmic vesicle. Its subcellular location is the secretory vesicle. Plays a role as a central modulator of cardiovascular and renal function and nociception. Also plays a role in energy metabolism and storage. Inhibits adrenocortical cell proliferation with minor stimulation on corticosteroid release. In terms of biological role, acts as a ligand for galanin receptors GALR2 and GALR3. Intracerebroventricular administration of the peptide induces an increase in arterial blood pressure, a decrease in both heart rate and renal excretion and delayed natriuresis. Intraventricular administration of the peptide induces antinociceptive activity. Also induces contraction of muscarinic-like stomach smooth muscles. Intraperitoneal administration of the peptide induces a reduction in food consumption and body weight. Inhibits long chain fatty acid uptake into adipocytes. Functionally, intracerebroventricular administration of the peptide induces a decrease in heart rate, but no change in arterial pressure, and an increase in urine flow rate. Intraventricular administration of the peptide induces antinociceptive activity. The polypeptide is Spexin (Spx) (Mus musculus (Mouse)).